Reading from the N-terminus, the 336-residue chain is Nicotinate-nucleotide--dimethylbenzimidazole phosphoribosyltransferase (336 aa).

Glu-304 acts as the Proton acceptor in catalysis.

Belongs to the CobT family.

The enzyme catalyses 5,6-dimethylbenzimidazole + nicotinate beta-D-ribonucleotide = alpha-ribazole 5'-phosphate + nicotinate + H(+). The protein operates within nucleoside biosynthesis; alpha-ribazole biosynthesis; alpha-ribazole from 5,6-dimethylbenzimidazole: step 1/2. Its function is as follows. Catalyzes the synthesis of alpha-ribazole-5'-phosphate from nicotinate mononucleotide (NAMN) and 5,6-dimethylbenzimidazole (DMB). The protein is Nicotinate-nucleotide--dimethylbenzimidazole phosphoribosyltransferase of Ruegeria sp. (strain TM1040) (Silicibacter sp.).